The chain runs to 423 residues: Methanol:N,N-dimethyl-4-nitrosoaniline oxidoreductase (423 aa).

It belongs to the iron-containing alcohol dehydrogenase family. In terms of assembly, homodecamer. It depends on Mg(2+) as a cofactor. Requires Zn(2+) as cofactor. The cofactor is NADPH.

It carries out the reaction methanol + A = formaldehyde + AH2. In terms of biological role, catalyzes the oxidation of methanol to yield formaldehyde. While the in vivo electron acceptor is not known, N,N-dimethyl-4-nitrosoaniline (NDMA) can serve this function in vitro and is reduced to 4-(hydroxylamino)-N,N-dimethylaniline. The chain is Methanol:N,N-dimethyl-4-nitrosoaniline oxidoreductase (thcE) from Rhodococcus erythropolis (Arthrobacter picolinophilus).